Reading from the N-terminus, the 479-residue chain is Cardiolipin synthase (479 aa).

The next 2 helical transmembrane spans lie at Ser-5–Leu-25 and Trp-34–Phe-54. 2 PLD phosphodiesterase domains span residues Ile-216–Tyr-243 and Gln-392–Ser-419. Residues His-221, Lys-223, Asp-228, His-397, Lys-399, and Asp-404 contribute to the active site.

It belongs to the phospholipase D family. Cardiolipin synthase subfamily.

The protein localises to the cell membrane. It carries out the reaction 2 a 1,2-diacyl-sn-glycero-3-phospho-(1'-sn-glycerol) = a cardiolipin + glycerol. Its function is as follows. Catalyzes the reversible phosphatidyl group transfer from one phosphatidylglycerol molecule to another to form cardiolipin (CL) (diphosphatidylglycerol) and glycerol. The sequence is that of Cardiolipin synthase (cls) from Oceanobacillus iheyensis (strain DSM 14371 / CIP 107618 / JCM 11309 / KCTC 3954 / HTE831).